Reading from the N-terminus, the 456-residue chain is Methionine aminopeptidase 2 (456 aa).

Residues 1–11 (MTIPVPKPAHP) show a composition bias toward pro residues. A disordered region spans residues 1 to 127 (MTIPVPKPAH…SYRTTSSEKR (127 aa)). Over residues 31–45 (EADEEEDDDDEEGKE) the composition is skewed to acidic residues. A compositionally biased stretch (basic residues) spans 66–79 (KKKKKKKKKPKKKK). Histidine 209 lines the substrate pocket. Aspartate 229, aspartate 240, and histidine 309 together coordinate a divalent metal cation. Position 317 (histidine 317) interacts with substrate. A divalent metal cation contacts are provided by glutamate 343 and glutamate 437.

This sequence belongs to the peptidase M24A family. Methionine aminopeptidase eukaryotic type 2 subfamily. Requires Co(2+) as cofactor. Zn(2+) serves as cofactor. Mn(2+) is required as a cofactor. It depends on Fe(2+) as a cofactor.

It localises to the cytoplasm. It carries out the reaction Release of N-terminal amino acids, preferentially methionine, from peptides and arylamides.. Cotranslationally removes the N-terminal methionine from nascent proteins. The N-terminal methionine is often cleaved when the second residue in the primary sequence is small and uncharged (Met-Ala-, Cys, Gly, Pro, Ser, Thr, or Val). This chain is Methionine aminopeptidase 2, found in Puccinia graminis f. sp. tritici (strain CRL 75-36-700-3 / race SCCL) (Black stem rust fungus).